Reading from the N-terminus, the 385-residue chain is ATP phosphoribosyltransferase regulatory subunit (385 aa).

Belongs to the class-II aminoacyl-tRNA synthetase family. HisZ subfamily. As to quaternary structure, heteromultimer composed of HisG and HisZ subunits.

The protein localises to the cytoplasm. The protein operates within amino-acid biosynthesis; L-histidine biosynthesis; L-histidine from 5-phospho-alpha-D-ribose 1-diphosphate: step 1/9. Its function is as follows. Required for the first step of histidine biosynthesis. May allow the feedback regulation of ATP phosphoribosyltransferase activity by histidine. The protein is ATP phosphoribosyltransferase regulatory subunit of Bordetella pertussis (strain Tohama I / ATCC BAA-589 / NCTC 13251).